Here is a 310-residue protein sequence, read N- to C-terminus: Prephenate dehydratase (310 aa).

The 188-residue stretch at R3–L190 folds into the Prephenate dehydratase domain. The ACT domain maps to A204–P281.

In terms of assembly, homodimer.

It carries out the reaction prephenate + H(+) = 3-phenylpyruvate + CO2 + H2O. It participates in amino-acid biosynthesis; L-phenylalanine biosynthesis; phenylpyruvate from prephenate: step 1/1. The sequence is that of Prephenate dehydratase (pheA) from Mycolicibacterium smegmatis (strain ATCC 700084 / mc(2)155) (Mycobacterium smegmatis).